The chain runs to 200 residues: Holliday junction branch migration complex subunit RuvA (200 aa).

Residues 1 to 64 (MIGRIVGTLI…EDSHTLYGFI (64 aa)) are domain I. The tract at residues 65-143 (DKNERALFRV…QAAKTDLFSA (79 aa)) is domain II. The interval 144-149 (PAVLRQ) is flexible linker. The interval 150–200 (VQADPRQEAEAALISLGYKPQEAAKAIAGVPVDAANSEDVIKAALKGMLRK) is domain III.

The protein belongs to the RuvA family. Homotetramer. Forms an RuvA(8)-RuvB(12)-Holliday junction (HJ) complex. HJ DNA is sandwiched between 2 RuvA tetramers; dsDNA enters through RuvA and exits via RuvB. An RuvB hexamer assembles on each DNA strand where it exits the tetramer. Each RuvB hexamer is contacted by two RuvA subunits (via domain III) on 2 adjacent RuvB subunits; this complex drives branch migration. In the full resolvosome a probable DNA-RuvA(4)-RuvB(12)-RuvC(2) complex forms which resolves the HJ.

It is found in the cytoplasm. Functionally, the RuvA-RuvB-RuvC complex processes Holliday junction (HJ) DNA during genetic recombination and DNA repair, while the RuvA-RuvB complex plays an important role in the rescue of blocked DNA replication forks via replication fork reversal (RFR). RuvA specifically binds to HJ cruciform DNA, conferring on it an open structure. The RuvB hexamer acts as an ATP-dependent pump, pulling dsDNA into and through the RuvAB complex. HJ branch migration allows RuvC to scan DNA until it finds its consensus sequence, where it cleaves and resolves the cruciform DNA. This Marinomonas sp. (strain MWYL1) protein is Holliday junction branch migration complex subunit RuvA.